The primary structure comprises 373 residues: Cobalt-precorrin-5B C(1)-methyltransferase (373 aa).

The protein belongs to the CbiD family.

The catalysed reaction is Co-precorrin-5B + S-adenosyl-L-methionine = Co-precorrin-6A + S-adenosyl-L-homocysteine. It participates in cofactor biosynthesis; adenosylcobalamin biosynthesis; cob(II)yrinate a,c-diamide from sirohydrochlorin (anaerobic route): step 6/10. In terms of biological role, catalyzes the methylation of C-1 in cobalt-precorrin-5B to form cobalt-precorrin-6A. This Listeria monocytogenes serotype 4a (strain HCC23) protein is Cobalt-precorrin-5B C(1)-methyltransferase.